A 128-amino-acid polypeptide reads, in one-letter code: Ribonuclease P protein component (128 aa).

It belongs to the RnpA family. Consists of a catalytic RNA component (M1 or rnpB) and a protein subunit.

It catalyses the reaction Endonucleolytic cleavage of RNA, removing 5'-extranucleotides from tRNA precursor.. RNaseP catalyzes the removal of the 5'-leader sequence from pre-tRNA to produce the mature 5'-terminus. It can also cleave other RNA substrates such as 4.5S RNA. The protein component plays an auxiliary but essential role in vivo by binding to the 5'-leader sequence and broadening the substrate specificity of the ribozyme. In Prochlorococcus marinus (strain NATL2A), this protein is Ribonuclease P protein component.